The following is a 504-amino-acid chain: uncharacterized protein (504 aa).

2 disordered regions span residues 1 to 59 and 171 to 255; these read MSSS…KNEY and GVNS…NQRL. Basic and acidic residues-rich tracts occupy residues 36–50 and 199–212; these read KPIDKEKEKEKKEIG and RAETPKGRKTESRQ. Polar residues predominate over residues 213 to 232; that stretch reads SNRGNNDNGDQRMTSKATTR.

This is an uncharacterized protein from Caenorhabditis elegans.